Here is an 890-residue protein sequence, read N- to C-terminus: Translation initiation factor IF-2 (890 aa).

The segment at 45–303 (LIDHLNQKNS…SLQQGFQKPA (259 aa)) is disordered. Residues 67–81 (STLNIPGTGGKSKSV) show a composition bias toward polar residues. Residues 92–217 (VKRDPQEAER…RMAEENKWTD (126 aa)) show a composition bias toward basic and acidic residues. Residues 252–266 (GRGRNAKAARPKKGN) show a composition bias toward basic residues. A compositionally biased stretch (basic and acidic residues) spans 267 to 280 (KHAESKADREEARA). Residues 389 to 558 (PRAPVVTIMG…LLQAEVLELK (170 aa)) enclose the tr-type G domain. Residues 398–405 (GHVDHGKT) are G1. Residue 398-405 (GHVDHGKT) coordinates GTP. The tract at residues 423–427 (GITQH) is G2. Residues 444-447 (DTPG) form a G3 region. GTP-binding positions include 444–448 (DTPGH) and 498–501 (NKID). The segment at 498–501 (NKID) is G4. Residues 534-536 (SAK) form a G5 region. Position 808 is an N6-acetyllysine (Lys-808).

It belongs to the TRAFAC class translation factor GTPase superfamily. Classic translation factor GTPase family. IF-2 subfamily.

Its subcellular location is the cytoplasm. Functionally, one of the essential components for the initiation of protein synthesis. Protects formylmethionyl-tRNA from spontaneous hydrolysis and promotes its binding to the 30S ribosomal subunits. Also involved in the hydrolysis of GTP during the formation of the 70S ribosomal complex. In Shigella boydii serotype 18 (strain CDC 3083-94 / BS512), this protein is Translation initiation factor IF-2.